Here is a 445-residue protein sequence, read N- to C-terminus: Ubiquitin carboxyl-terminal hydrolase MINDY-3 (445 aa).

Cysteine 51 (nucleophile) is an active-site residue. Serine 125 is modified (phosphoserine). Histidine 287 (proton acceptor) is an active-site residue.

It belongs to the MINDY deubiquitinase family. FAM188 subfamily. As to quaternary structure, interacts with COPS5. In terms of tissue distribution, widely expressed with high levels in heart, skeletal muscle, and kidney, and low levels in liver and brain. Also expressed in lung (at protein level).

It localises to the nucleus. It carries out the reaction Thiol-dependent hydrolysis of ester, thioester, amide, peptide and isopeptide bonds formed by the C-terminal Gly of ubiquitin (a 76-residue protein attached to proteins as an intracellular targeting signal).. Hydrolase that can remove 'Lys-48'-linked conjugated ubiquitin from proteins. In Homo sapiens (Human), this protein is Ubiquitin carboxyl-terminal hydrolase MINDY-3.